The sequence spans 262 residues: Glycerol uptake facilitator protein (262 aa).

The Cytoplasmic segment spans residues methionine 1 to lysine 7. Residues lysine 8 to leucine 36 form a helical membrane-spanning segment. The Extracellular segment spans residues threonine 37 to phenylalanine 41. A helical membrane pass occupies residues asparagine 42–serine 62. The Cytoplasmic segment spans residues serine 63–serine 65. An intramembrane segment occupies glycine 66–leucine 69. The short motif at asparagine 70–alanine 72 is the NPA 1 element. Positions asparagine 70 to serine 80 form an intramembrane region, helical. The Cytoplasmic segment spans residues serine 81–lysine 86. The helical transmembrane segment at lysine 87–phenylalanine 110 threads the bilayer. Over asparagine 111 to tyrosine 145 the chain is Extracellular. A helical transmembrane segment spans residues asparagine 146–lysine 171. Topologically, residues asparagine 172–phenylalanine 180 are cytoplasmic. The chain crosses the membrane as a helical span at residues isoleucine 181–leucine 197. Residues threonine 198–serine 201 lie on the Extracellular side of the membrane. Residues asparagine 202–leucine 205 lie within the membrane without spanning it. An NPA 2 motif is present at residues asparagine 206–alanine 208. The segment at residues asparagine 206–leucine 219 is an intramembrane region (helical). The Extracellular segment spans residues isoleucine 220 to isoleucine 234. A helical transmembrane segment spans residues phenylalanine 235–tyrosine 259. The Cytoplasmic portion of the chain corresponds to isoleucine 260 to lysine 262.

The protein belongs to the MIP/aquaporin (TC 1.A.8) family.

It is found in the cell membrane. It catalyses the reaction glycerol(in) = glycerol(out). In terms of biological role, mediates glycerol diffusion across the cytoplasmic membrane via a pore-type mechanism. The polypeptide is Glycerol uptake facilitator protein (glpF) (Buchnera aphidicola subsp. Schizaphis graminum (strain Sg)).